The chain runs to 480 residues: Ochratoxinase (480 aa).

Residues H111, H113, K246, H287, and H307 each coordinate Zn(2+). K246 is a catalytic residue. The active site involves D378.

This sequence belongs to the metallo-dependent hydrolases superfamily. Ochratoxinase amidase 2 family. As to quaternary structure, homooctamer. Requires Zn(2+) as cofactor.

Its subcellular location is the secreted. The enzyme catalyses ochratoxin A + H2O = ochratoxin alpha + L-phenylalanine. With respect to regulation, the Zn(2+)-specific chelator 1,10-phenanthroline inhibits the enzyme activity. Functionally, carboxypeptidase that catalyzes the release of a C-terminal amino acid with specific catalytic activity for aromatic amino acids such as phenylalanine. Is able to degrade ochratoxin A, one of the five major mycotoxins most harmful to humans and animals that is produced by Aspergillus and Penicillium species and occurs in a wide range of agricultural products. This is Ochratoxinase from Aspergillus niger (strain ATCC 1015 / CBS 113.46 / FGSC A1144 / LSHB Ac4 / NCTC 3858a / NRRL 328 / USDA 3528.7).